Reading from the N-terminus, the 546-residue chain is Cholesterol oxidase (546 aa).

The segment at residues 1-42 (MTAQQHLSRRRMLGMAAFGAAALAGGTTIAAPRAAAAAKSAA) is a signal peptide (tat-type signal). Positions 57, 58, 77, 152, 156, 157, 159, and 287 each coordinate FAD. Residues glutamate 398 and histidine 484 each act as proton acceptor in the active site. Glycine 512 and phenylalanine 524 together coordinate FAD.

Belongs to the GMC oxidoreductase family. Monomer. It depends on FAD as a cofactor. Post-translationally, predicted to be exported by the Tat system. The position of the signal peptide cleavage has been experimentally proven.

It localises to the secreted. The catalysed reaction is cholesterol + O2 = cholest-5-en-3-one + H2O2. It catalyses the reaction cholest-5-en-3-one = cholest-4-en-3-one. Its pathway is steroid metabolism; cholesterol degradation. In terms of biological role, bifunctional enzyme that catalyzes the oxidation and isomerization of cholesterol to cholestenone (cholest-4-en-3-one), an initial step in the cholesterol degradation process. The cholesterol degradation pathway allows the bacterium to utilize cholesterol as its sole source of carbon and energy. The polypeptide is Cholesterol oxidase (Streptomyces sp. (strain SA-COO)).